A 270-amino-acid polypeptide reads, in one-letter code: Bis(5'-nucleosyl)-tetraphosphatase, symmetrical (270 aa).

The protein belongs to the Ap4A hydrolase family.

The catalysed reaction is P(1),P(4)-bis(5'-adenosyl) tetraphosphate + H2O = 2 ADP + 2 H(+). Functionally, hydrolyzes diadenosine 5',5'''-P1,P4-tetraphosphate to yield ADP. The polypeptide is Bis(5'-nucleosyl)-tetraphosphatase, symmetrical (Actinobacillus pleuropneumoniae serotype 3 (strain JL03)).